Reading from the N-terminus, the 343-residue chain is Small ribosomal subunit biogenesis GTPase RsgA (343 aa).

Positions 116 to 275 (HGQLKPVAAN…LIDSPGIREF (160 aa)) constitute a CP-type G domain. Residues 163-166 (NKAD) and 217-225 (GQSGVGKSS) contribute to the GTP site. Positions 299, 304, 306, and 312 each coordinate Zn(2+).

This sequence belongs to the TRAFAC class YlqF/YawG GTPase family. RsgA subfamily. As to quaternary structure, monomer. Associates with 30S ribosomal subunit, binds 16S rRNA. Zn(2+) is required as a cofactor.

It localises to the cytoplasm. In terms of biological role, one of several proteins that assist in the late maturation steps of the functional core of the 30S ribosomal subunit. Helps release RbfA from mature subunits. May play a role in the assembly of ribosomal proteins into the subunit. Circularly permuted GTPase that catalyzes slow GTP hydrolysis, GTPase activity is stimulated by the 30S ribosomal subunit. The protein is Small ribosomal subunit biogenesis GTPase RsgA of Pseudomonas putida (strain ATCC 700007 / DSM 6899 / JCM 31910 / BCRC 17059 / LMG 24140 / F1).